The chain runs to 619 residues: TOX high mobility group box family member 4 (619 aa).

2 disordered regions span residues 155–227 (LSLG…QKPV) and 306–335 (DPVP…TESP). T176 is subject to Phosphothreonine. S178 and S182 each carry phosphoserine. Positions 183-193 (LHEDGVDDFRR) are enriched in basic and acidic residues. A compositionally biased stretch (basic residues) spans 208–218 (KQKAPKKRKKK). The Nuclear localization signal signature appears at 213–218 (KKRKKK). The HMG box DNA-binding region spans 223-291 (PQKPVSAYAL…EYLKALAAYK (69 aa)). T313 bears the Phosphothreonine mark. Phosphoserine is present on S315. Residues 320–335 (TAADPASPAPASTESP) show a composition bias toward low complexity. R479 is modified (asymmetric dimethylarginine). S531, S548, S550, S558, S560, and S565 each carry phosphoserine.

In terms of assembly, component of the PNUTS-PP1 phosphatase complex, composed of PPP1R10/PNUTS, TOX4, WDR82 and PPP1CA or PPP1CB or PPP1CC. Interacts with PPP1R10/PNUTS. Interacts with FOXO1 and CREB1 (increased by cAMP); FOXO1 and CREB1 are required for full induction of TOX4-dependent activity and the interactions are inhibited by insulin.

It is found in the nucleus. The protein resides in the chromosome. With respect to regulation, in liver, recruited to target gene promoters following treatment with dexamethasone and cAMP. Binding is decreased in presence of insulin. In terms of biological role, transcription factor that modulates cell fate reprogramming from the somatic state to the pluripotent and neuronal fate. In liver, controls the expression of hormone-regulated gluconeogenic genes such as G6PC1 and PCK1. This regulation is independent of the insulin receptor activation. Also acts as a regulatory component of protein phosphatase 1 (PP1) complexes. Component of the PNUTS-PP1 protein phosphatase complex, a PP1 complex that regulates RNA polymerase II transcription pause-release. PNUTS-PP1 also plays a role in the control of chromatin structure and cell cycle progression during the transition from mitosis into interphase. In Mus musculus (Mouse), this protein is TOX high mobility group box family member 4.